Here is a 197-residue protein sequence, read N- to C-terminus: Ribonuclease HII (197 aa).

An RNase H type-2 domain is found at 11 to 197 (HLIAGVDEVG…FAPVKKILGL (187 aa)). Aspartate 17, glutamate 18, and aspartate 109 together coordinate a divalent metal cation.

This sequence belongs to the RNase HII family. Mn(2+) is required as a cofactor. Requires Mg(2+) as cofactor.

The protein resides in the cytoplasm. The catalysed reaction is Endonucleolytic cleavage to 5'-phosphomonoester.. Its function is as follows. Endonuclease that specifically degrades the RNA of RNA-DNA hybrids. This is Ribonuclease HII from Actinobacillus pleuropneumoniae serotype 5b (strain L20).